We begin with the raw amino-acid sequence, 281 residues long: MAELISFVVPTQSDKVLLVWDLSTGPPAEALSHSLFTVFSQFGLLYSVRVFPNAAVARPGFYAIIKFYSSRDAQRAQKACDGKPLFQTSPVKVRLGTRHKALQHQAFALNSSRCQELANYYFGFSGWSKRIIKLQELSGLEDAALAVPMQKGSPQFLCAVEVVLPPYGCRSPGVGISEEPLRQLEEGQSSFLMKRKTAQKLAFQAAVSDAFQKLTIVVLESGRIAVEYRPTAEDLDARSEEELQNLIQVSCSSWSQSSQREEECLSDFSLEEEDLKLCDPH.

A necessary for nuclear localization and for nucleolar accumulation in response to heat shock region spans residues 1–92 (MAELISFVVP…KPLFQTSPVK (92 aa)). One can recognise an RRM domain in the interval 15–98 (KVLLVWDLST…SPVKVRLGTR (84 aa)). The interval 90-133 (PVKVRLGTRHKALQHQAFALNSSRCQELANYYFGFSGWSKRIIK) is necessary for nuclear and nucleolar localization.

Homodimer.

It is found in the nucleus. The protein localises to the cytoplasm. Its subcellular location is the nucleolus. The protein resides in the cajal body. It localises to the PML body. Its function is as follows. May confer resistance to the antitumor agent cisplatin. Binds to DNA and RNA. This is RAD52 motif-containing protein 1 (Rdm1) from Mus musculus (Mouse).